Here is a 69-residue protein sequence, read N- to C-terminus: DNA-directed RNA polymerase subunit epsilon (69 aa).

It belongs to the RNA polymerase subunit epsilon family. In terms of assembly, RNAP is composed of a core of 2 alpha, a beta and a beta' subunit. The core is associated with a delta subunit, and at least one of epsilon or omega. When a sigma factor is associated with the core the holoenzyme is formed, which can initiate transcription.

It carries out the reaction RNA(n) + a ribonucleoside 5'-triphosphate = RNA(n+1) + diphosphate. Functionally, a non-essential component of RNA polymerase (RNAP). The sequence is that of DNA-directed RNA polymerase subunit epsilon from Bacillus velezensis (strain DSM 23117 / BGSC 10A6 / LMG 26770 / FZB42) (Bacillus amyloliquefaciens subsp. plantarum).